The primary structure comprises 621 residues: KIF-binding protein (621 aa).

Ser178 carries the phosphoserine modification.

The protein belongs to the KIF-binding protein family. Interacts with KIF1B; positively regulates KIF1B microtubule motor activity. Interacts with STMN2.

Its subcellular location is the cytoplasm. It localises to the cytoskeleton. Its function is as follows. Activator of KIF1B plus-end-directed microtubule motor activity. Required for organization of axonal microtubules, and axonal outgrowth and maintenance during peripheral and central nervous system development. The protein is KIF-binding protein (KIFBP) of Bos taurus (Bovine).